A 65-amino-acid chain; its full sequence is Large ribosomal subunit protein bL35 (65 aa).

The segment at Met-1–Gln-26 is disordered. The segment covering Ala-10–Gln-26 has biased composition (basic residues).

This sequence belongs to the bacterial ribosomal protein bL35 family.

The protein is Large ribosomal subunit protein bL35 of Actinobacillus pleuropneumoniae serotype 7 (strain AP76).